Reading from the N-terminus, the 153-residue chain is Histone H2B.3 (153 aa).

2 stretches are compositionally biased toward basic and acidic residues: residues 1 to 10 (MAPKKDEKPA) and 20 to 54 (AKAEAKPKAEKAGKKAKKEPAKKAAKEPKGDGEKK). The disordered stretch occupies residues 1–60 (MAPKKDEKPATAEAGAEAPAKAEAKPKAEKAGKKAKKEPAKKAAKEPKGDGEKKDKKKKK). 2 positions are modified to N6-acetyllysine: lysine 41 and lysine 42. Lysine 149 is covalently cross-linked (Glycyl lysine isopeptide (Lys-Gly) (interchain with G-Cter in ubiquitin)).

The protein belongs to the histone H2B family. The nucleosome is a histone octamer containing two molecules each of H2A, H2B, H3 and H4 assembled in one H3-H4 heterotetramer and two H2A-H2B heterodimers. The octamer wraps approximately 147 bp of DNA. The N-terminus is blocked. In terms of processing, can be acetylated to form H2BK33ac and H2BK34ac. Acetylated mainly on the ubiquitinated form. Post-translationally, monoubiquitinated to form H2BK143ub1; which is increased during the light period and may give a specific tag for epigenetic transcriptional activation.

It localises to the nucleus. Its subcellular location is the chromosome. Its function is as follows. Core component of nucleosome. Nucleosomes wrap and compact DNA into chromatin, limiting DNA accessibility to the cellular machineries which require DNA as a template. Histones thereby play a central role in transcription regulation, DNA repair, DNA replication and chromosomal stability. DNA accessibility is regulated via a complex set of post-translational modifications of histones, also called histone code, and nucleosome remodeling. This Chlamydomonas reinhardtii (Chlamydomonas smithii) protein is Histone H2B.3.